The sequence spans 193 residues: 3-isopropylmalate dehydratase small subunit (193 aa).

This sequence belongs to the LeuD family. LeuD type 1 subfamily. As to quaternary structure, heterodimer of LeuC and LeuD.

The enzyme catalyses (2R,3S)-3-isopropylmalate = (2S)-2-isopropylmalate. It participates in amino-acid biosynthesis; L-leucine biosynthesis; L-leucine from 3-methyl-2-oxobutanoate: step 2/4. Functionally, catalyzes the isomerization between 2-isopropylmalate and 3-isopropylmalate, via the formation of 2-isopropylmaleate. This Bacillus cereus (strain B4264) protein is 3-isopropylmalate dehydratase small subunit.